A 538-amino-acid polypeptide reads, in one-letter code: Bifunctional purine biosynthesis protein PurH (538 aa).

The 148-residue stretch at 11–158 folds into the MGS-like domain; the sequence is PDLHRVRRAL…KNHAYTGVVT (148 aa).

This sequence belongs to the PurH family.

The enzyme catalyses (6R)-10-formyltetrahydrofolate + 5-amino-1-(5-phospho-beta-D-ribosyl)imidazole-4-carboxamide = 5-formamido-1-(5-phospho-D-ribosyl)imidazole-4-carboxamide + (6S)-5,6,7,8-tetrahydrofolate. It catalyses the reaction IMP + H2O = 5-formamido-1-(5-phospho-D-ribosyl)imidazole-4-carboxamide. It functions in the pathway purine metabolism; IMP biosynthesis via de novo pathway; 5-formamido-1-(5-phospho-D-ribosyl)imidazole-4-carboxamide from 5-amino-1-(5-phospho-D-ribosyl)imidazole-4-carboxamide (10-formyl THF route): step 1/1. The protein operates within purine metabolism; IMP biosynthesis via de novo pathway; IMP from 5-formamido-1-(5-phospho-D-ribosyl)imidazole-4-carboxamide: step 1/1. This Bartonella bacilliformis (strain ATCC 35685 / KC583 / Herrer 020/F12,63) protein is Bifunctional purine biosynthesis protein PurH.